The primary structure comprises 315 residues: DNA-directed RNA polymerase subunit alpha (315 aa).

Positions 1–228 (MLEIEKPVIQ…EHFKLFMTLT (228 aa)) are alpha N-terminal domain (alpha-NTD). Residues 245-315 (KEKALEMTIE…LGLNLRLNDE (71 aa)) are alpha C-terminal domain (alpha-CTD).

This sequence belongs to the RNA polymerase alpha chain family. In terms of assembly, homodimer. The RNAP catalytic core consists of 2 alpha, 1 beta, 1 beta' and 1 omega subunit. When a sigma factor is associated with the core the holoenzyme is formed, which can initiate transcription.

It catalyses the reaction RNA(n) + a ribonucleoside 5'-triphosphate = RNA(n+1) + diphosphate. DNA-dependent RNA polymerase catalyzes the transcription of DNA into RNA using the four ribonucleoside triphosphates as substrates. In Clostridium perfringens (strain ATCC 13124 / DSM 756 / JCM 1290 / NCIMB 6125 / NCTC 8237 / Type A), this protein is DNA-directed RNA polymerase subunit alpha.